A 466-amino-acid chain; its full sequence is Paraneoplastic antigen Ma3 homolog (466 aa).

A disordered region spans residues 379–408; the sequence is RPYQGSRRRRHRRRGQHRKGGVPRDDSQGT. Residues 384 to 399 are compositionally biased toward basic residues; sequence SRRRRHRRRGQHRKGG. The CCHC-type zinc-finger motif lies at 415–432; that stretch reads TFCYSCGEDGHIRVHCFN. Residues 441–466 form a disordered region; that stretch reads QKRQAAMEKGNRSWAWEKSHPKPKTK. The segment covering 445 to 460 has biased composition (basic and acidic residues); the sequence is AAMEKGNRSWAWEKSH.

This sequence belongs to the PNMA family. As to expression, expressed in the cerebrum and cerebellum.

Its subcellular location is the nucleus. It is found in the nucleolus. In Mus musculus (Mouse), this protein is Paraneoplastic antigen Ma3 homolog (Pnma3).